Reading from the N-terminus, the 304-residue chain is Histone H1.8 (304 aa).

Low complexity predominate over residues 1–24; that stretch reads MAPGSVSSVSSSSFPSRDTSPSGS. Disordered stretches follow at residues 1 to 38, 110 to 248, and 270 to 304; these read MAPGSVSSVSSSSFPSRDTSPSGSCGLPGADKPGPSCR, SKAK…NSVA, and TVQETKVPTPSQDIGHKVQPIPRVRKAKTPENTQA. The H15 domain occupies 45–123; sequence RNPTMLHMVL…GATGSFKLVP (79 aa). Over residues 132-144 the composition is skewed to low complexity; it reads APKAGRGAAGAKE. Basic and acidic residues-rich tracts occupy residues 153-166, 189-202, and 225-237; these read LKKDQVGKATMEKG, KPKEVRKAPLKQDK, and ANAHGKTKGEKSK. The Nuclear localization signal motif lies at 154–170; that stretch reads KKDQVGKATMEKGQKRR. The segment covering 270-281 has biased composition (polar residues); sequence TVQETKVPTPSQ.

The protein belongs to the histone H1/H5 family. In terms of tissue distribution, oocyte-specific.

It is found in the cytoplasm. The protein resides in the nucleus. Its subcellular location is the chromosome. May play a key role in the control of gene expression during oogenesis and early embryogenesis, presumably through the perturbation of chromatin structure. Essential for meiotic maturation of germinal vesicle-stage oocytes. The somatic type linker histone H1c is rapidly replaced by H1oo in a donor nucleus transplanted into an oocyte. The greater mobility of H1oo as compared to H1c may contribute to this rapid replacement and increased instability of the embryonic chromatin structure. The rapid replacement of H1c with H1oo may play an important role in nuclear remodeling. In Mus musculus (Mouse), this protein is Histone H1.8.